Reading from the N-terminus, the 481-residue chain is U6 small nuclear RNA (adenine-(43)-N(6))-methyltransferase (481 aa).

S-adenosyl-L-methionine-binding residues include lysine 82, glycine 108, aspartate 131, threonine 164, and asparagine 184.

This sequence belongs to the methyltransferase superfamily. METTL16/RlmF family. As to quaternary structure, self-associates. Interacts with dlc-1; the interaction is direct, and is required for nuclear localization of mett-10.

It localises to the nucleus. It carries out the reaction an adenosine in mRNA + S-adenosyl-L-methionine = an N(6)-methyladenosine in mRNA + S-adenosyl-L-homocysteine + H(+). It catalyses the reaction adenosine in U6 snRNA + S-adenosyl-L-methionine = N(6)-methyladenosine in U6 snRNA + S-adenosyl-L-homocysteine + H(+). RNA N6-methyltransferase that methylates adenosine residues at the N(6) position of a subset of RNAs and is involved in S-adenosyl-L-methionine homeostasis by regulating splicing of S-adenosylmethionine synthase transcripts (sams-3, sams-4 and sams-5). Able to N6-methylate a subset of mRNAs containing the 5'UACAGAAAC-3' nonamer sequence. Plays a key role in S-adenosyl-L-methionine homeostasis: under rich-diet conditions, catalyzes N6-methylation of S-adenosylmethionine synthase mRNAs (sams-3, sams-4 and sams-5), directly inhibiting splicing and protein production of S-adenosylmethionine synthase. In addition to mRNAs, also able to mediate N6-methylation of U6 small nuclear RNA (U6 snRNA). Required for gamete production, inhibiting germ cell proliferative fate and ensuring germ cell meiotic development. Also promotes progression of the mitotic cell cycle in those germ cells that continue to proliferate. Plays a role in the development of the vulva, somatic gonad and embryo. This chain is U6 small nuclear RNA (adenine-(43)-N(6))-methyltransferase, found in Caenorhabditis briggsae.